A 163-amino-acid chain; its full sequence is Nucleotide-binding protein HDEF_1968 (163 aa).

It belongs to the YajQ family.

Nucleotide-binding protein. The protein is Nucleotide-binding protein HDEF_1968 of Hamiltonella defensa subsp. Acyrthosiphon pisum (strain 5AT).